Consider the following 879-residue polypeptide: MNEQYSAMRSNVSMLGTLLGDTIKEALGEHILEKVETIRKLSKSSRAGNEASRQELLTTLQNLSNDELLPVARAFSQFLNLTNTAEQYHSISPHGEAASNPEALAQLFTRLKDKKLSEQDMRSAVDELSIELVLTAHPTEITRRTLIHKLVEVNTCLSQLDHNDLADYERNKIMRRLRQLVAQSWHTDEIRKIRPSPVDEAKWGFAVVENSLWEGVPAFLREFNEQLQNSLDYRLPVEAVPIRFTSWMGGDRDGNPNVTAEITRHVLLLSRWKATDLFLRDIQVLVSELSMSECTPELRELAGGEEVLEPYRELMKRVRTQLTNTQAYLEARLKGERVLPPTDLLVSNDQLWDPLYACYQSLKACGMEIIANGQLLDTLRRVRCFGVPLVRIDVRQESTRHTDAIAELTRYLGLGDYESWSEADKQAFLIRELNSKRPLVPLKWEPSADTQEVLETCRVIAEAPQGSIAAYVISMAKVPSDVLAVHLLLKEAGCPFTLPVAPLFETLDDLNNADDVMTQLLNIDWYRGLIQGKQMVMIGYSDSAKDAGVMAASWAQYRAQDALIKTCEKAGISLTLFHGRGGSIGRGGAPAHAALLSQPPGSLKGGLRVTEQGEMIRFKFGLPEVTISSLALYASAVLEANLLPPPEPKKEWNEVMDILSDASCEMYRGYVRENPQFVPYFRAATPELELGKLPLGSRPAKRRPNGGVESLRAIPWIFAWTQNRLMLPAWLGAGAGLQKAIDAGKKEVLATMCRDWPFFSTRIGMLEMVFAKADLWLAEYYDQRLVDKSLWPLGQQLRDQLEADIKVVLAIANDDHLMADLPWIAESIALRNVYTDPLNVLQAELLHRSRQQENAADACVEQALMVTIAGVAAGMRNTG.

Active-site residues include His137 and Lys545.

It belongs to the PEPCase type 1 family. Requires Mg(2+) as cofactor.

It carries out the reaction oxaloacetate + phosphate = phosphoenolpyruvate + hydrogencarbonate. Its function is as follows. Forms oxaloacetate, a four-carbon dicarboxylic acid source for the tricarboxylic acid cycle. The chain is Phosphoenolpyruvate carboxylase from Yersinia enterocolitica serotype O:8 / biotype 1B (strain NCTC 13174 / 8081).